Here is a 397-residue protein sequence, read N- to C-terminus: Tryptophan synthase beta chain (397 aa).

At Lys-88 the chain carries N6-(pyridoxal phosphate)lysine.

The protein belongs to the TrpB family. In terms of assembly, tetramer of two alpha and two beta chains. Pyridoxal 5'-phosphate is required as a cofactor.

The enzyme catalyses (1S,2R)-1-C-(indol-3-yl)glycerol 3-phosphate + L-serine = D-glyceraldehyde 3-phosphate + L-tryptophan + H2O. Its pathway is amino-acid biosynthesis; L-tryptophan biosynthesis; L-tryptophan from chorismate: step 5/5. The beta subunit is responsible for the synthesis of L-tryptophan from indole and L-serine. The protein is Tryptophan synthase beta chain of Haemophilus influenzae (strain PittEE).